The following is a 389-amino-acid chain: Mannuronan synthase (389 aa).

The PilZ domain maps to 16 to 116 (QRQFARVKLP…EVAALRYLIT (101 aa)).

This sequence belongs to the Alg44 family.

The protein localises to the periplasm. It carries out the reaction [(1-&gt;4)-beta-D-mannuronosyl](n) + GDP-alpha-D-mannuronate = [(1-&gt;4)-beta-D-mannuronosyl](n+1) + GDP + H(+). Its pathway is glycan biosynthesis; alginate biosynthesis. In terms of biological role, required for alginate biosynthesis. The sequence is that of Mannuronan synthase (alg44) from Pseudomonas aeruginosa (strain ATCC 15692 / DSM 22644 / CIP 104116 / JCM 14847 / LMG 12228 / 1C / PRS 101 / PAO1).